The primary structure comprises 1048 residues: Ankyrin repeat domain-containing protein 27 (1048 aa).

Residues 1-372 are sufficient for GEF activity towards RAB21; it reads MALYDEDLLK…RQGSLSTKTP (372 aa). The 139-residue stretch at 233–371 folds into the VPS9 domain; it reads ASEDAAFNKI…IRQGSLSTKT (139 aa). ANK repeat units follow at residues 396 to 426, 462 to 491, 495 to 524, 528 to 557, 564 to 593, and 597 to 627; these read TPIDCLFKHIASGNQKEVERLLSQDDQDKDA, RGQTPLHVAALCGQASLIDFLVSKGAVVNA, HGSTPLHLACQKGFQSVTLLLLHYKASTEV, NGNTPLHLACTYGQEDCVKALVYYDVQACR, KGDTALHIAARWGYEGIIETLLQNGAPTAV, and LKETPLKCALNSKILSIMEAHHLSSDRRPRP. Residues 396-460 form a sufficient for interaction with VPS29 region; it reads TPIDCLFKHI…PSVVTPFSRD (65 aa). Residues 451–600 form an interaction with RAB38 region; sequence PSVVTPFSRD…TAVQNRLKET (150 aa). Residues 451–729 form an interaction with RAB32 region; the sequence is PSVVTPFSRD…CAPAQKLARI (279 aa). The span at 618 to 627 shows a compositional bias: basic and acidic residues; it reads HLSSDRRPRP. Positions 618 to 650 are disordered; that stretch reads HLSSDRRPRPSEVPAQSPTRSVDSISQGSSTSS. Positions 638 to 650 are enriched in low complexity; it reads SVDSISQGSSTSS. The tract at residues 658 to 707 is required for interaction with VAMP7; sequence FRQEEVKKDYREVEKLLRAVADGDLEMVRYLLEWTEDDLDDVEDAISTVD. 5 ANK repeats span residues 668-698, 742-771, 775-804, 808-837, and 841-870; these read REVEKLLRAVADGDLEMVRYLLEWTEDDLDD, DGFSPLHMAALHGRTDLVPLLLKHGAYSGA, SQAVPLHLACQQGHFQVAKCLLDSNAKPNK, SGNTPLICACSAGHHEVAALLLQHGASINA, and KGNTALHEAVMGRHTLVVELLLFYGASVDI. Positions 692 to 745 are sufficient for interaction with VPS29; that stretch reads TEDDLDDVEDAISTVDLEFCHPLCQCPKCAPAQKLARISANGLSVNVTNQDGFS. Basic and acidic residues predominate over residues 949–962; it reads ERTSRETMGRDRSV. A disordered region spans residues 949–1019; the sequence is ERTSRETMGR…AAPGHRPMVR (71 aa). Residues Ser961 and Ser969 each carry the phosphoserine modification. Residues 979 to 995 show a composition bias toward polar residues; it reads TGKQSDLSDLSRYQTSE. The segment covering 996-1006 has biased composition (basic and acidic residues); it reads EGNKGLPERPV. Thr1022 is subject to Phosphothreonine.

As to quaternary structure, interacts with RAB21 (GDP-bound form), VPS29, KIF5A, KIF5C, GOLGA4. Interacts with RAB32 (GTP-bound form), RAB38 (GTP-bound form), VAMP7. Interacts with low affinity with RAB5. ANKRD27:RAB32 heterodimers can homodimerize to form tetramers. Can interact with RAB38 or RAB32, VPS29 and VAMP7 simultaneously. A decreased interaction with RAB32 seen in the presence of SGSM2.

The protein localises to the early endosome. The protein resides in the late endosome. It is found in the cytoplasmic vesicle membrane. It localises to the lysosome. Its subcellular location is the cell membrane. The protein localises to the melanosome. The protein resides in the cytoplasmic vesicle. Its function is as follows. May be a guanine exchange factor (GEF) for Rab21, Rab32 and Rab38 and regulate endosome dynamics. May regulate the participation of VAMP7 in membrane fusion events; in vitro inhibits VAMP7-mediated SNARE complex formation by trapping VAMP7 in a closed, fusogenically inactive conformation. Involved in peripheral melanosomal distribution of TYRP1 in melanocytes; the function, which probably is implicating vesicle-trafficking, includes cooperation with Rab32, Rab38 and VAMP7. Involved in the regulation of neurite growth; the function seems to require its GEF activity, probably towards Rab21, and VAMP7 but not Rab32/38. Proposed to be involved in Golgi sorting of VAMP7 and transport of VAMP7 vesicles to the cell surface; the function seems to implicate kinesin heavy chain isoform 5 proteins, GOLGA4, RAB21 and MACF1. Required for the colocalization of VAMP7 and Rab21, probably on TGN sites. Involved in GLUT1 endosome-to-plasma membrane trafficking; the function is dependent of association with VPS29. Regulates the proper trafficking of melanogenic enzymes TYR, TYRP1 and DCT/TYRP2 to melanosomes in melanocytes. The polypeptide is Ankyrin repeat domain-containing protein 27 (Ankrd27) (Mus musculus (Mouse)).